Reading from the N-terminus, the 740-residue chain is Phosphoribosylformylglycinamidine synthase subunit PurL (740 aa).

The active site involves His-55. ATP contacts are provided by Tyr-58 and Lys-97. Residue Glu-99 coordinates Mg(2+). Residues 100 to 103 (SHNH) and Arg-122 contribute to the substrate site. Catalysis depends on His-101, which acts as the Proton acceptor. Position 123 (Asp-123) interacts with Mg(2+). Gln-246 provides a ligand contact to substrate. Residue Asp-276 participates in Mg(2+) binding. Residue 320–322 (ESQ) coordinates substrate. Residues Asp-501 and Gly-538 each coordinate ATP. Asn-539 provides a ligand contact to Mg(2+). Ser-541 lines the substrate pocket.

Belongs to the FGAMS family. As to quaternary structure, monomer. Part of the FGAM synthase complex composed of 1 PurL, 1 PurQ and 2 PurS subunits.

The protein localises to the cytoplasm. The enzyme catalyses N(2)-formyl-N(1)-(5-phospho-beta-D-ribosyl)glycinamide + L-glutamine + ATP + H2O = 2-formamido-N(1)-(5-O-phospho-beta-D-ribosyl)acetamidine + L-glutamate + ADP + phosphate + H(+). The protein operates within purine metabolism; IMP biosynthesis via de novo pathway; 5-amino-1-(5-phospho-D-ribosyl)imidazole from N(2)-formyl-N(1)-(5-phospho-D-ribosyl)glycinamide: step 1/2. In terms of biological role, part of the phosphoribosylformylglycinamidine synthase complex involved in the purines biosynthetic pathway. Catalyzes the ATP-dependent conversion of formylglycinamide ribonucleotide (FGAR) and glutamine to yield formylglycinamidine ribonucleotide (FGAM) and glutamate. The FGAM synthase complex is composed of three subunits. PurQ produces an ammonia molecule by converting glutamine to glutamate. PurL transfers the ammonia molecule to FGAR to form FGAM in an ATP-dependent manner. PurS interacts with PurQ and PurL and is thought to assist in the transfer of the ammonia molecule from PurQ to PurL. The sequence is that of Phosphoribosylformylglycinamidine synthase subunit PurL from Lacticaseibacillus casei (Lactobacillus casei).